Reading from the N-terminus, the 473-residue chain is Suppressor of SWI4 1 homolog (473 aa).

The region spanning 29 to 292 (PHSFVFTRGC…LIKVQEGVGE (264 aa)) is the Brix domain. Phosphoserine occurs at positions 238 and 240. The disordered stretch occupies residues 323 to 473 (AQRQAQQAQN…GRGRPRKRVA (151 aa)). Over residues 324–334 (QRQAQQAQNVQ) the composition is skewed to low complexity. Over residues 335 to 360 (RKQEQREAHRKKSLEGMKKARVRGGD) the composition is skewed to basic and acidic residues. A compositionally biased stretch (acidic residues) spans 376–388 (GEDDDEQEDDDIE). Positions 407 to 421 (KRKRLAKSPGQKRKR) are enriched in basic residues. Over residues 422-444 (REMDRGRGRLCDQKFPKPKDKSH) the composition is skewed to basic and acidic residues. Lys438 carries the post-translational modification N6-acetyllysine. A compositionally biased stretch (basic residues) spans 464–473 (GRGRPRKRVA).

It is found in the nucleus. It localises to the nucleolus. In terms of biological role, may have a role in cell growth. In Pongo abelii (Sumatran orangutan), this protein is Suppressor of SWI4 1 homolog (PPAN).